The following is a 408-amino-acid chain: Intracellular coagulation inhibitor 2 (408 aa).

The first 22 residues, 1–22 (MLSRRTLDCCLVMLIVSTTFCQ), serve as a signal peptide directing secretion. Residues Cys-50 and Cys-249 are joined by a disulfide bond. N-linked (GlcNAc...) asparagine glycosylation is present at Asn-174.

This sequence belongs to the serpin family. In terms of assembly, monomer. Forms a covalent heterodimer with clotting factor C chain B. Forms a covalent heterodimer with proclotting enzyme heavy chain. In terms of tissue distribution, specifically expressed in hemocytes (at protein level).

It localises to the secreted. Its function is as follows. Serine protease inhibitor that inhibits proclotting enzyme and to a lesser extent clotting factor C and clotting factor G. The protein is Intracellular coagulation inhibitor 2 of Tachypleus tridentatus (Japanese horseshoe crab).